Here is a 422-residue protein sequence, read N- to C-terminus: Dipeptidase aclJ (422 aa).

The chain crosses the membrane as a helical span at residues 28–45 (LAYSVTLTLVALFFTFAL). Positions 77 and 79 each coordinate Zn(2+). A glycan (N-linked (GlcNAc...) asparagine) is linked at N96. A disulfide bridge connects residues C128 and C219. E190 contacts Zn(2+). Position 217 (H217) interacts with substrate. N-linked (GlcNAc...) asparagine glycosylation is present at N270. An intrachain disulfide couples C287 to C319. Residues R291 and D351 each coordinate substrate.

It belongs to the metallo-dependent hydrolases superfamily. Peptidase M19 family. Zn(2+) serves as cofactor.

It is found in the membrane. The enzyme catalyses an L-aminoacyl-L-amino acid + H2O = 2 an L-alpha-amino acid. Its pathway is mycotoxin biosynthesis. In terms of biological role, dipeptidase; part of the gene cluster that mediates the biosynthesis of aspirochlorine (or antibiotic A30641), an unusual halogenated spiro compound with distinctive antifungal properties due to selective inhibition of protein biosynthesis, and which is also active against bacteria, viruses, and murine tumor cells. The non-ribosomal peptide synthetase (NRPS) aclP is responsible the formation of the diketopiperazine (DKP) core from the condensation of 2 phenylalanine residues. One Phe residue is tailored into chlorotyrosine by hydroxylation and chlorination, whereas the second Phe undergoes an unprecedented C-C bond cleavage to be converted into glycine. After formation of the DKP, sulfur is incorporated into the DKP by conjugation with glutathione by aclG, followed by its stepwise degradation to the thiol by aclI, aclJ and aclK, and the dithiol oxidation by aclT. In addition, oxygenases (aclB, aclC, aclL and aclO) and O-methyltransferases (aclM and aclU) act as tailoring enzymes to produce the intermediate dechloroaspirochlorine. Ultimately, chlorination of dechloroaspirochlorine by the halogenase aclH is the last step in the aspirochlorine pathway. This chain is Dipeptidase aclJ, found in Aspergillus oryzae (strain ATCC 42149 / RIB 40) (Yellow koji mold).